A 260-amino-acid chain; its full sequence is Acetyl-coenzyme A carboxylase carboxyl transferase subunit alpha (260 aa).

Residues 1-235 (MSAYDKVMAA…SNKILHSINK (235 aa)) enclose the CoA carboxyltransferase C-terminal domain.

It belongs to the AccA family. In terms of assembly, acetyl-CoA carboxylase is a heterohexamer composed of biotin carboxyl carrier protein (AccB), biotin carboxylase (AccC) and two subunits each of ACCase subunit alpha (AccA) and ACCase subunit beta (AccD).

The protein resides in the cytoplasm. It catalyses the reaction N(6)-carboxybiotinyl-L-lysyl-[protein] + acetyl-CoA = N(6)-biotinyl-L-lysyl-[protein] + malonyl-CoA. It functions in the pathway lipid metabolism; malonyl-CoA biosynthesis; malonyl-CoA from acetyl-CoA: step 1/1. Its function is as follows. Component of the acetyl coenzyme A carboxylase (ACC) complex. First, biotin carboxylase catalyzes the carboxylation of biotin on its carrier protein (BCCP) and then the CO(2) group is transferred by the carboxyltransferase to acetyl-CoA to form malonyl-CoA. The chain is Acetyl-coenzyme A carboxylase carboxyl transferase subunit alpha from Ruminiclostridium cellulolyticum (strain ATCC 35319 / DSM 5812 / JCM 6584 / H10) (Clostridium cellulolyticum).